Reading from the N-terminus, the 963-residue chain is Bifunctional glutamine synthetase adenylyltransferase/adenylyl-removing enzyme (963 aa).

Residues 1 to 451 are adenylyl removase; sequence MAAPSELQLY…EHFADIIAER (451 aa). The segment at 461–963 is adenylyl transferase; sequence TIEWKALWAG…VAFWEKVFAE (503 aa).

Belongs to the GlnE family. Requires Mg(2+) as cofactor.

It carries out the reaction [glutamine synthetase]-O(4)-(5'-adenylyl)-L-tyrosine + phosphate = [glutamine synthetase]-L-tyrosine + ADP. It catalyses the reaction [glutamine synthetase]-L-tyrosine + ATP = [glutamine synthetase]-O(4)-(5'-adenylyl)-L-tyrosine + diphosphate. Functionally, involved in the regulation of glutamine synthetase GlnA, a key enzyme in the process to assimilate ammonia. When cellular nitrogen levels are high, the C-terminal adenylyl transferase (AT) inactivates GlnA by covalent transfer of an adenylyl group from ATP to specific tyrosine residue of GlnA, thus reducing its activity. Conversely, when nitrogen levels are low, the N-terminal adenylyl removase (AR) activates GlnA by removing the adenylyl group by phosphorolysis, increasing its activity. The regulatory region of GlnE binds the signal transduction protein PII (GlnB) which indicates the nitrogen status of the cell. This Hahella chejuensis (strain KCTC 2396) protein is Bifunctional glutamine synthetase adenylyltransferase/adenylyl-removing enzyme.